The primary structure comprises 182 residues: ATP synthase subunit delta (182 aa).

Belongs to the ATPase delta chain family. In terms of assembly, F-type ATPases have 2 components, F(1) - the catalytic core - and F(0) - the membrane proton channel. F(1) has five subunits: alpha(3), beta(3), gamma(1), delta(1), epsilon(1). F(0) has three main subunits: a(1), b(2) and c(10-14). The alpha and beta chains form an alternating ring which encloses part of the gamma chain. F(1) is attached to F(0) by a central stalk formed by the gamma and epsilon chains, while a peripheral stalk is formed by the delta and b chains.

It is found in the cell membrane. F(1)F(0) ATP synthase produces ATP from ADP in the presence of a proton or sodium gradient. F-type ATPases consist of two structural domains, F(1) containing the extramembraneous catalytic core and F(0) containing the membrane proton channel, linked together by a central stalk and a peripheral stalk. During catalysis, ATP synthesis in the catalytic domain of F(1) is coupled via a rotary mechanism of the central stalk subunits to proton translocation. In terms of biological role, this protein is part of the stalk that links CF(0) to CF(1). It either transmits conformational changes from CF(0) to CF(1) or is implicated in proton conduction. This is ATP synthase subunit delta from Alkalihalophilus pseudofirmus (strain ATCC BAA-2126 / JCM 17055 / OF4) (Bacillus pseudofirmus).